The primary structure comprises 390 residues: MPEEHEHNFVVSQENWSLHRKGYQDQQRHSDKVKDAIKNNLPDLVSEENIIMSNGRDVVKIPIRSLDEYKIRYNYEKSKHVGQGDGESEVGDVVARDPNASQQGQQGQGNGKKAGDQPGTDFYESEVSIAEIEEALFQELELPNLKQKDEVEITTEKIEFNDVRKKGLMGNVDKKRTILTALKRNAREGKAQITPIYNDDLRFKTWNEIIKRDSKAVVIAMMDTSASMGTFEKYMARSFFFWMNRFLRTKYDTVEFEFIAHHTEAKVVSEEDFFSKGESGGTICSSAYHKALEVIDEKFNPRSYNIYPFHFSDGENISSDNATCIDLVHEIMEKSNMFGYGEVNGYNRYSTLMNAYKNIEDPKFKHYILKEKADVYHAMKSFFHKQPEKV.

The segment at 99 to 121 is disordered; that stretch reads NASQQGQQGQGNGKKAGDQPGTD.

The protein belongs to the UPF0229 family.

The protein is UPF0229 protein OB2647 of Oceanobacillus iheyensis (strain DSM 14371 / CIP 107618 / JCM 11309 / KCTC 3954 / HTE831).